A 139-amino-acid chain; its full sequence is Nucleoside diphosphate kinase (139 aa).

Residues Lys10, Phe58, Arg86, Thr92, Arg104, and Asn114 each coordinate ATP. The active-site Pros-phosphohistidine intermediate is His117.

It belongs to the NDK family. As to quaternary structure, homotetramer. Mg(2+) is required as a cofactor.

It localises to the cytoplasm. The enzyme catalyses a 2'-deoxyribonucleoside 5'-diphosphate + ATP = a 2'-deoxyribonucleoside 5'-triphosphate + ADP. It catalyses the reaction a ribonucleoside 5'-diphosphate + ATP = a ribonucleoside 5'-triphosphate + ADP. Its function is as follows. Major role in the synthesis of nucleoside triphosphates other than ATP. The ATP gamma phosphate is transferred to the NDP beta phosphate via a ping-pong mechanism, using a phosphorylated active-site intermediate. The chain is Nucleoside diphosphate kinase from Nocardia farcinica (strain IFM 10152).